A 443-amino-acid polypeptide reads, in one-letter code: Exodeoxyribonuclease 7 large subunit (443 aa).

Belongs to the XseA family. As to quaternary structure, heterooligomer composed of large and small subunits.

The protein resides in the cytoplasm. The enzyme catalyses Exonucleolytic cleavage in either 5'- to 3'- or 3'- to 5'-direction to yield nucleoside 5'-phosphates.. Functionally, bidirectionally degrades single-stranded DNA into large acid-insoluble oligonucleotides, which are then degraded further into small acid-soluble oligonucleotides. In Vibrio campbellii (strain ATCC BAA-1116), this protein is Exodeoxyribonuclease 7 large subunit.